A 246-amino-acid chain; its full sequence is CD99 antigen-like protein 2 (246 aa).

A signal peptide spans 1–25 (MVARLTTLLVCLVFSLATLVQRGYG). Over 26–160 (DFDDFNLEDA…PGSGAVTDPG (135 aa)) the chain is Extracellular. The segment at 43 to 156 (KQSHFSTTTR…SQDDPGSGAV (114 aa)) is disordered. 2 stretches are compositionally biased toward low complexity: residues 49 to 58 (TTTRRTGTTR) and 71 to 81 (TTTTTKRPGTT). A compositionally biased stretch (basic and acidic residues) spans 100–109 (DDRNDLDGPK). Residue serine 153 is glycosylated (O-linked (Xyl...) (chondroitin sulfate) serine). A helical membrane pass occupies residues 161–181 (TIAGLVSALAAALLGAVSGYL). The Cytoplasmic segment spans residues 182-246 (SYQHRKFCFS…EPLAPERPRI (65 aa)). Positions 223-246 (APPVTDSTQHSQPTEPLAPERPRI) are disordered. Residues 227–236 (TDSTQHSQPT) show a composition bias toward polar residues.

It belongs to the CD99 family. In terms of processing, O-glycosylated. Expressed predominantly in the ventral medullary surface of the brain, moderate expression in the cerebral cortex and cerebellum. Low expression in lung and kidney. No expression in heart, stomach, intestine and skeletal muscle.

The protein resides in the cell membrane. It is found in the cell junction. Its subcellular location is the secreted. In terms of biological role, plays a role in a late step of leukocyte extravasation helping cells to overcome the endothelial basement membrane. Acts at the same site as, but independently of, PECAM1. Homophilic adhesion molecule, but these interactions may not be required for cell aggregation. In Rattus norvegicus (Rat), this protein is CD99 antigen-like protein 2 (Cd99l2).